We begin with the raw amino-acid sequence, 129 residues long: MPTIQQLIRHGRSVKVSKTASPALEKCPQKRGVCTRVYTTTPKKPNSALRKVARVRLSNKIEVTAYIPGEGHNLQEHSIVLIRGGRVKDLPGVRYHIVRGTLDTSGVSDRKQSRSKYGAKQPKAVAAKK.

Position 89 is a 3-methylthioaspartic acid (Asp-89). Positions 101-129 are disordered; sequence TLDTSGVSDRKQSRSKYGAKQPKAVAAKK.

Belongs to the universal ribosomal protein uS12 family. As to quaternary structure, part of the 30S ribosomal subunit. Contacts proteins S8 and S17. May interact with IF1 in the 30S initiation complex.

With S4 and S5 plays an important role in translational accuracy. Functionally, interacts with and stabilizes bases of the 16S rRNA that are involved in tRNA selection in the A site and with the mRNA backbone. Located at the interface of the 30S and 50S subunits, it traverses the body of the 30S subunit contacting proteins on the other side and probably holding the rRNA structure together. The combined cluster of proteins S8, S12 and S17 appears to hold together the shoulder and platform of the 30S subunit. The protein is Small ribosomal subunit protein uS12 of Chlorobium luteolum (strain DSM 273 / BCRC 81028 / 2530) (Pelodictyon luteolum).